The following is a 744-amino-acid chain: Tripartite motif-containing protein 2 (744 aa).

S10 carries the phosphoserine modification. The RING-type zinc-finger motif lies at 23–64; sequence CSICLERYKNPKVLPCLHTFCERCLQNYIPAHSLTLSCPVCR. A B box-type zinc finger spans residues 113-154; it reads GKPLSCPNHDGNVMEFYCQSCETAMCRECTEGEHAEHPTVPL. Zn(2+) contacts are provided by C118, H121, C141, and H146. A Filamin repeat occupies 320–421; that stretch reads TTNAVASETV…IRGSPFKLKV (102 aa). T371 carries the post-translational modification Phosphothreonine. S375, S424, and S428 each carry phosphoserine. The segment at 432–462 is disordered; that stretch reads EGVKRRVKSPGSGHVKQKAVKRPASMYSTGK. NHL repeat units follow at residues 473–516, 520–563, 564–605, 609–652, 656–699, and 700–743; these read IFRV…FSND, KSRF…FSND, GKFK…FQPN, VTRF…FNQE, MLKF…FDGS, and GSFL…YRYL.

This sequence belongs to the TRIM/RBCC family. As to quaternary structure, forms homooligomers. Interacts with TRIM3; this interaction reduces TRIM2 activity. Interacts with myosin V; myosin V may not be a substrate for ubiquitination. Interacts with NEFL. Interacts with phosphorylated BCL2L11. Interacts with SIRPA. RING-type zinc finger-dependent and UBE2D1-dependent autoubiquitination. Highly expressed in the cerebellum, hippocampus, retina and spinal cord. In the cerebellum, strongest expression in Purkinje cells and in the deep cerebellar nuclei. In retina, high expression in the ganglionic cell layer, inner nuclear layer and inthe outer plexiform layer. Particularly high expression in the hippocampus, in pyramidal cells of CA1-CA3 hippocampal areas and ingranule cells of the dentate gyrus.

Its subcellular location is the cytoplasm. The enzyme catalyses S-ubiquitinyl-[E2 ubiquitin-conjugating enzyme]-L-cysteine + [acceptor protein]-L-lysine = [E2 ubiquitin-conjugating enzyme]-L-cysteine + N(6)-ubiquitinyl-[acceptor protein]-L-lysine.. The protein operates within protein modification; protein ubiquitination. Functionally, UBE2D1-dependent E3 ubiquitin-protein ligase that mediates the ubiquitination of NEFL and of phosphorylated BCL2L11. Plays a neuroprotective function. May play a role in neuronal rapid ischemic tolerance. Plays a role in antiviral immunity and limits new world arenavirus infection independently of its ubiquitin ligase activity by decreasing virus internalization. This Mus musculus (Mouse) protein is Tripartite motif-containing protein 2 (Trim2).